Here is a 746-residue protein sequence, read N- to C-terminus: Eukaryotic translation initiation factor 3 subunit B (746 aa).

Residues 1-11 (MAPSYEHLREA) show a composition bias toward basic and acidic residues. A disordered region spans residues 1 to 20 (MAPSYEHLREADLDEDEFDE). Residues 42–128 (TFVVIDGLPE…HTLRVNKLMD (87 aa)) enclose the RRM domain. 7 WD repeats span residues 195 to 234 (DRPNWTESFVQWSPLGTYLLSMHMQGVQLWGGPKWDRLGR), 247 to 294 (PQEN…RSFA), 307 to 346 (PRKHPWPAFKWSSDDKYVARLTQGQSISVYELPRMNLLDK), 349 to 386 (IKVEGVQDFEWAPSRPQRDGVKTYEQMFCYWTPEIGSN), 458 to 500 (TIKD…FFCP), 517 to 560 (LDKR…EKPE), and 575 to 620 (ADHY…LREE).

It belongs to the eIF-3 subunit B family. As to quaternary structure, component of the eukaryotic translation initiation factor 3 (eIF-3) complex.

The protein resides in the cytoplasm. Its function is as follows. RNA-binding component of the eukaryotic translation initiation factor 3 (eIF-3) complex, which is involved in protein synthesis of a specialized repertoire of mRNAs and, together with other initiation factors, stimulates binding of mRNA and methionyl-tRNAi to the 40S ribosome. The eIF-3 complex specifically targets and initiates translation of a subset of mRNAs involved in cell proliferation. In Pyricularia oryzae (strain 70-15 / ATCC MYA-4617 / FGSC 8958) (Rice blast fungus), this protein is Eukaryotic translation initiation factor 3 subunit B.